Here is a 782-residue protein sequence, read N- to C-terminus: E3 UFM1-protein ligase 1 homolog (782 aa).

The interval 405–478 (VSTQELEDDG…TRGGGGASKK (74 aa)) is disordered.

It belongs to the UFL1 family.

Its function is as follows. E3 UFM1-protein ligase that mediates ufmylation of target proteins. In Drosophila simulans (Fruit fly), this protein is E3 UFM1-protein ligase 1 homolog.